An 817-amino-acid chain; its full sequence is Probable beta-glucosidase G (817 aa).

Positions 1-20 (MANIAHLIVSGLLAATVAHG) are cleaved as a signal peptide. Residues Asn40, Asn58, Asn229, and Asn276 are each glycosylated (N-linked (GlcNAc...) asparagine). Asp304 is an active-site residue. Asn343, Asn350, Asn402, Asn507, Asn563, Asn584, Asn623, Asn662, Asn679, and Asn715 each carry an N-linked (GlcNAc...) asparagine glycan.

This sequence belongs to the glycosyl hydrolase 3 family.

Its subcellular location is the secreted. It catalyses the reaction Hydrolysis of terminal, non-reducing beta-D-glucosyl residues with release of beta-D-glucose.. The protein operates within glycan metabolism; cellulose degradation. Its function is as follows. Beta-glucosidases are one of a number of cellulolytic enzymes involved in the degradation of cellulosic biomass. Catalyzes the last step releasing glucose from the inhibitory cellobiose. The protein is Probable beta-glucosidase G (bglG) of Aspergillus terreus (strain NIH 2624 / FGSC A1156).